A 502-amino-acid polypeptide reads, in one-letter code: Aspartyl/glutamyl-tRNA(Asn/Gln) amidotransferase subunit B (502 aa).

Belongs to the GatB/GatE family. GatB subfamily. Heterotrimer of A, B and C subunits.

It catalyses the reaction L-glutamyl-tRNA(Gln) + L-glutamine + ATP + H2O = L-glutaminyl-tRNA(Gln) + L-glutamate + ADP + phosphate + H(+). The catalysed reaction is L-aspartyl-tRNA(Asn) + L-glutamine + ATP + H2O = L-asparaginyl-tRNA(Asn) + L-glutamate + ADP + phosphate + 2 H(+). In terms of biological role, allows the formation of correctly charged Asn-tRNA(Asn) or Gln-tRNA(Gln) through the transamidation of misacylated Asp-tRNA(Asn) or Glu-tRNA(Gln) in organisms which lack either or both of asparaginyl-tRNA or glutaminyl-tRNA synthetases. The reaction takes place in the presence of glutamine and ATP through an activated phospho-Asp-tRNA(Asn) or phospho-Glu-tRNA(Gln). This Pseudarthrobacter chlorophenolicus (strain ATCC 700700 / DSM 12829 / CIP 107037 / JCM 12360 / KCTC 9906 / NCIMB 13794 / A6) (Arthrobacter chlorophenolicus) protein is Aspartyl/glutamyl-tRNA(Asn/Gln) amidotransferase subunit B.